The following is a 644-amino-acid chain: DNA gyrase subunit B (644 aa).

The 115-residue stretch at 429–543 folds into the Toprim domain; that stretch reads CEIFLVEGDS…AGYVYIAQPP (115 aa). Glu-435, Asp-508, and Asp-510 together coordinate Mg(2+).

The protein belongs to the type II topoisomerase GyrB family. Heterotetramer, composed of two GyrA and two GyrB chains. In the heterotetramer, GyrA contains the active site tyrosine that forms a transient covalent intermediate with DNA, while GyrB binds cofactors and catalyzes ATP hydrolysis. Requires Mg(2+) as cofactor. The cofactor is Mn(2+). It depends on Ca(2+) as a cofactor.

It localises to the cytoplasm. It catalyses the reaction ATP-dependent breakage, passage and rejoining of double-stranded DNA.. Functionally, a type II topoisomerase that negatively supercoils closed circular double-stranded (ds) DNA in an ATP-dependent manner to modulate DNA topology and maintain chromosomes in an underwound state. Negative supercoiling favors strand separation, and DNA replication, transcription, recombination and repair, all of which involve strand separation. Also able to catalyze the interconversion of other topological isomers of dsDNA rings, including catenanes and knotted rings. Type II topoisomerases break and join 2 DNA strands simultaneously in an ATP-dependent manner. This chain is DNA gyrase subunit B, found in Staphylococcus aureus (strain MRSA252).